We begin with the raw amino-acid sequence, 229 residues long: Ribonuclease 3 (229 aa).

In terms of domain architecture, RNase III spans 5–127 (LDRLERKLGY…LIGAIYLDTG (123 aa)). E40 contacts Mg(2+). D44 is a catalytic residue. 2 residues coordinate Mg(2+): D113 and E116. E116 is an active-site residue. In terms of domain architecture, DRBM spans 154–224 (DPKTRLQEFL…AAAALVALGV (71 aa)).

The protein belongs to the ribonuclease III family. Homodimer. Requires Mg(2+) as cofactor.

It is found in the cytoplasm. The catalysed reaction is Endonucleolytic cleavage to 5'-phosphomonoester.. Digests double-stranded RNA. Involved in the processing of primary rRNA transcript to yield the immediate precursors to the large and small rRNAs (23S and 16S). Processes some mRNAs, and tRNAs when they are encoded in the rRNA operon. Processes pre-crRNA and tracrRNA of type II CRISPR loci if present in the organism. The polypeptide is Ribonuclease 3 (Pseudomonas paraeruginosa (strain DSM 24068 / PA7) (Pseudomonas aeruginosa (strain PA7))).